Here is a 250-residue protein sequence, read N- to C-terminus: MITSYFNKIEEILQIVLQKEENLLKQAAEKVAESIQNGGIIQLFGCGHSHLLTEEVFYRAGGLVPIKPILVEPLMLHEGAVRSSKLERQNDYADWFLQDQDLQANDVLIVLSTSGRNPVPVDVAAYGKEKGAFVIGVTSLEYSKSQPSRHKSGKHLYNSVDLVINNHSVKGDAVLSYEKVQVPFAPTSTVVGATILNSMFAEAIKRMADNGYEPPIFLSGNIDGADDHNQLLIERYQKRIPLLALDGDEA.

In terms of domain architecture, SIS spans Val-31 to Pro-214.

This sequence belongs to the UPF0309 family.

In Halalkalibacterium halodurans (strain ATCC BAA-125 / DSM 18197 / FERM 7344 / JCM 9153 / C-125) (Bacillus halodurans), this protein is UPF0309 protein BH0227.